The following is a 297-amino-acid chain: Putative peptidyl-prolyl cis-trans isomerase YacD (297 aa).

An N-terminal signal peptide occupies residues 1-32 (MKSRTIWTIILGALLVCCIAVAYTLTKSQAGA). The PpiC domain maps to 154–247 (DDSYRIRHIV…NGYAIIQLKE (94 aa)).

The catalysed reaction is [protein]-peptidylproline (omega=180) = [protein]-peptidylproline (omega=0). This chain is Putative peptidyl-prolyl cis-trans isomerase YacD (yacD), found in Bacillus subtilis (strain 168).